Reading from the N-terminus, the 498-residue chain is Putative antiporter subunit mnhD2 (498 aa).

The next 14 helical transmembrane spans lie at 2–22, 32–52, 78–98, 108–128, 130–150, 161–181, 209–229, 240–260, 271–291, 308–328, 330–350, 369–389, 406–426, and 451–471; these read LSNL…ILVF, YLYL…LIYV, LSLI…AYGF, YHLP…FLTS, LFNL…LITL, IIYV…IGLL, ISLI…FMWL, LAAL…IRFF, IHPL…IGVI, IGFI…GAIF, LVND…LVYI, FGVA…FSGF, IGLA…FRIF, and ILSI…VVLN.

It belongs to the CPA3 antiporters (TC 2.A.63) subunit D family. May form a heterooligomeric complex that consists of seven subunits: mnhA2, mnhB2, mnhC2, mnhD2, mnhE2, mnhF2 and mnhG2.

The protein localises to the cell membrane. This is Putative antiporter subunit mnhD2 (mnhD2) from Staphylococcus aureus (strain Mu3 / ATCC 700698).